A 352-amino-acid polypeptide reads, in one-letter code: Non-disjunction protein 1 (352 aa).

Interacts with MPS3.

It is found in the nucleus. The protein resides in the chromosome. The protein localises to the telomere. In terms of biological role, required for telomeric clustering (bouquet stage) during meiosis 1 prophase, formation and efficient homolog pairing, meiosis 1 disjunction, and telomere deletion during meiosis. Also promotes meiotic recombination. In Saccharomyces cerevisiae (strain ATCC 204508 / S288c) (Baker's yeast), this protein is Non-disjunction protein 1 (NDJ1).